An 846-amino-acid chain; its full sequence is Translation initiation factor IF-2 (846 aa).

The tract at residues 94-263 is disordered; it reads QRSPEEIQAE…HGFQNPTGPV (170 aa). Residues 96–135 show a composition bias toward basic and acidic residues; the sequence is SPEEIQAEQKRELDERRAAENAARDKVEAEVRQRNEEQAR. Low complexity-rich tracts occupy residues 136 to 148 and 158 to 176; these read RQAA…APAP and AAPV…ASED. Basic and acidic residues-rich tracts occupy residues 177–206 and 230–239; these read AAAR…RGEA and TTDEESDGAR. Over residues 240-253 the composition is skewed to basic residues; sequence RGRGGKSKLKKRNQ. Positions 346 to 513 constitute a tr-type G domain; sequence SRAPVVTVMG…AVLLQAEILE (168 aa). Residues 355–362 are G1; sequence GHVDHGKT. GTP is bound at residue 355 to 362; the sequence is GHVDHGKT. Residues 380 to 384 are G2; sequence GITQH. Residues 401–404 are G3; that stretch reads DTPG. Residues 401-405 and 455-458 contribute to the GTP site; these read DTPGH and NKID. Positions 455–458 are G4; sequence NKID. A G5 region spans residues 491–493; sequence SAK.

This sequence belongs to the TRAFAC class translation factor GTPase superfamily. Classic translation factor GTPase family. IF-2 subfamily.

It localises to the cytoplasm. One of the essential components for the initiation of protein synthesis. Protects formylmethionyl-tRNA from spontaneous hydrolysis and promotes its binding to the 30S ribosomal subunits. Also involved in the hydrolysis of GTP during the formation of the 70S ribosomal complex. This is Translation initiation factor IF-2 from Pseudomonas putida (strain ATCC 47054 / DSM 6125 / CFBP 8728 / NCIMB 11950 / KT2440).